We begin with the raw amino-acid sequence, 500 residues long: L-arabinose isomerase (500 aa).

Mn(2+) contacts are provided by Glu306, Glu333, His350, and His450.

This sequence belongs to the arabinose isomerase family. Homohexamer. The cofactor is Mn(2+).

It catalyses the reaction beta-L-arabinopyranose = L-ribulose. The protein operates within carbohydrate degradation; L-arabinose degradation via L-ribulose; D-xylulose 5-phosphate from L-arabinose (bacterial route): step 1/3. In terms of biological role, catalyzes the conversion of L-arabinose to L-ribulose. This Escherichia coli O157:H7 protein is L-arabinose isomerase.